A 90-amino-acid polypeptide reads, in one-letter code: Carboxysome shell vertex protein CsoS4A (90 aa).

The region spanning 1–78 is the BMV domain; sequence MKIYKVDKTL…SDLTIVGIID (78 aa).

Belongs to the CcmL/EutN family. CsoS4 subfamily. In terms of assembly, homopentamer.

It is found in the carboxysome. In terms of biological role, probably forms vertices in the carboxysome, a polyhedral inclusion where RuBisCO (ribulose bisphosphate carboxylase, cbbL-cbbS) is sequestered. Has been modeled to induce curvature upon insertion into an otherwise flat hexagonal layer of major carboxysome subunits. In Hydrogenovibrio crunogenus (strain DSM 25203 / XCL-2) (Thiomicrospira crunogena), this protein is Carboxysome shell vertex protein CsoS4A.